Reading from the N-terminus, the 169-residue chain is Ribosome maturation factor RimP (169 aa).

This sequence belongs to the RimP family.

Its subcellular location is the cytoplasm. Functionally, required for maturation of 30S ribosomal subunits. This Koribacter versatilis (strain Ellin345) protein is Ribosome maturation factor RimP.